We begin with the raw amino-acid sequence, 201 residues long: MRLLVGLGNPGAKYQGNRHNIGFMALDEIARRHGFSPWRRRFQGETADGSIGGERVTLLKPLTFMNDSGRAVQDAASFFKLGLPEIIVLHDEIELPAAKLRVKVGGGIAGHNGLRSISAHIGNEYRRVRIGVGHPGVKELVHGHVLNDFAKAERPWVEAMLEAITDNADLLVGDRDSQFQNKVHLALQAKGFLDKSDNGAK.

Y14 provides a ligand contact to tRNA. H19 functions as the Proton acceptor in the catalytic mechanism. TRNA is bound by residues F64, N66, and N112.

This sequence belongs to the PTH family. In terms of assembly, monomer.

Its subcellular location is the cytoplasm. It catalyses the reaction an N-acyl-L-alpha-aminoacyl-tRNA + H2O = an N-acyl-L-amino acid + a tRNA + H(+). In terms of biological role, hydrolyzes ribosome-free peptidyl-tRNAs (with 1 or more amino acids incorporated), which drop off the ribosome during protein synthesis, or as a result of ribosome stalling. Catalyzes the release of premature peptidyl moieties from peptidyl-tRNA molecules trapped in stalled 50S ribosomal subunits, and thus maintains levels of free tRNAs and 50S ribosomes. This chain is Peptidyl-tRNA hydrolase, found in Rhodopseudomonas palustris (strain BisA53).